A 420-amino-acid polypeptide reads, in one-letter code: Protein translocase subunit SecF (420 aa).

6 helical membrane passes run 7-27, 250-270, 276-296, 309-327, 358-378, and 388-408; these read FSLL…AGVL, LLVR…FLYV, WFFA…MVSF, IAAI…VVVF, VVTT…TEGG, and VGMV…IALI.

The protein belongs to the SecD/SecF family. SecF subfamily. In terms of assembly, forms a complex with SecD. Part of the essential Sec protein translocation apparatus which comprises SecA, SecYEG and auxiliary proteins SecDF. Other proteins may also be involved.

It is found in the cell inner membrane. Its function is as follows. Part of the Sec protein translocase complex. Interacts with the SecYEG preprotein conducting channel. SecDF uses the proton motive force (PMF) to complete protein translocation after the ATP-dependent function of SecA. In Treponema pallidum (strain Nichols), this protein is Protein translocase subunit SecF.